A 425-amino-acid polypeptide reads, in one-letter code: MQTVIKNGTVYQNGRLIHADVLIEDQKIKAIGTDLTGDKVIDATGKLVSPGLVDVHVHYRDPGQTYKEDIETGSKAAAHGGFTTVGAMPNVTPVPDTPDLMKKMVQENKQKGIVHIFQYGPITKNETTDELPDYAALKKAGAFALSNDGHGVQTAQTMYLAMQEAKKNDLIVAAHAQDDSLFNHGIVNEGEKAKELNLPPVTELAETTQIARDLLLAEKTGVHYHICHVSTKTSVELVRIAKACGINVTCEAAPHHLLLTEDDIPKDNGYYKMNPPLRSKEDQVALLVGLLDGTIDLIATDHAPHAKQEKQGGMQNAAFGITGSETAFSTLYTKFVKEDKVFTLEQLLSWLSDQPAKVFGLKKAGVLEPGCPADVAIFDLEHETELKEKNYQSKGINTPFTGQKIYGATVMTMVDGEVVYQRGEK.

His-56 and His-58 together coordinate Zn(2+). Substrate is bound by residues 58–60 (HYR) and Asn-90. Zn(2+)-binding residues include Asp-148, His-175, and His-228. Substrate is bound at residue Asn-274. Asp-301 lines the Zn(2+) pocket. Asp-301 is an active-site residue. Residues His-305 and 319–320 (FG) each bind substrate.

Belongs to the metallo-dependent hydrolases superfamily. DHOase family. Class I DHOase subfamily. It depends on Zn(2+) as a cofactor.

The enzyme catalyses (S)-dihydroorotate + H2O = N-carbamoyl-L-aspartate + H(+). It participates in pyrimidine metabolism; UMP biosynthesis via de novo pathway; (S)-dihydroorotate from bicarbonate: step 3/3. Functionally, catalyzes the reversible cyclization of carbamoyl aspartate to dihydroorotate. This chain is Dihydroorotase, found in Lactobacillus delbrueckii subsp. bulgaricus (strain ATCC BAA-365 / Lb-18).